The chain runs to 363 residues: Histidinol-phosphate aminotransferase (363 aa).

Position 227 is an N6-(pyridoxal phosphate)lysine (Lys-227).

The protein belongs to the class-II pyridoxal-phosphate-dependent aminotransferase family. Histidinol-phosphate aminotransferase subfamily. In terms of assembly, homodimer. Pyridoxal 5'-phosphate is required as a cofactor.

The catalysed reaction is L-histidinol phosphate + 2-oxoglutarate = 3-(imidazol-4-yl)-2-oxopropyl phosphate + L-glutamate. It functions in the pathway amino-acid biosynthesis; L-histidine biosynthesis; L-histidine from 5-phospho-alpha-D-ribose 1-diphosphate: step 7/9. In Akkermansia muciniphila (strain ATCC BAA-835 / DSM 22959 / JCM 33894 / BCRC 81048 / CCUG 64013 / CIP 107961 / Muc), this protein is Histidinol-phosphate aminotransferase.